Consider the following 756-residue polypeptide: Catalase-peroxidase (756 aa).

A cross-link (tryptophyl-tyrosyl-methioninium (Trp-Tyr) (with M-270)) is located at residues 91–244; the sequence is WHSAGTYRTG…LAAVQMGLIY (154 aa). The active-site Proton acceptor is the H92. A disordered region spans residues 198–230; that stretch reads AQKKMQQPGDGTLVAEPENHANEESRTASGERN. A compositionally biased stretch (basic and acidic residues) spans 214-223; the sequence is PENHANEESR. The tryptophyl-tyrosyl-methioninium (Tyr-Met) (with W-91) cross-link spans 244–270; the sequence is YVNPEGPEGVPDPVASARDIRETFGRM. H285 lines the heme b pocket. Residues 371–390 form a disordered region; it reads KNGAGAGKIPDAHDPSKRHA.

The protein belongs to the peroxidase family. Peroxidase/catalase subfamily. In terms of assembly, homodimer or homotetramer. Requires heme b as cofactor. Post-translationally, formation of the three residue Trp-Tyr-Met cross-link is important for the catalase, but not the peroxidase activity of the enzyme.

The enzyme catalyses H2O2 + AH2 = A + 2 H2O. The catalysed reaction is 2 H2O2 = O2 + 2 H2O. Bifunctional enzyme with both catalase and broad-spectrum peroxidase activity. This is Catalase-peroxidase from Pseudomonas syringae pv. tomato (strain ATCC BAA-871 / DC3000).